The sequence spans 44 residues: Small ribosomal subunit protein eS7 (44 aa).

The span at 18-34 (KPTRKSRIKNKQKRPRS) shows a compositional bias: basic residues. Positions 18-44 (KPTRKSRIKNKQKRPRSRTLTAVHDAI) are disordered.

It belongs to the eukaryotic ribosomal protein eS7 family. In terms of assembly, component of the small ribosomal subunit.

It localises to the cytoplasm. Its subcellular location is the cytoskeleton. The protein localises to the microtubule organizing center. The protein resides in the centrosome. It is found in the nucleus. Component of the small ribosomal subunit. The ribosome is a large ribonucleoprotein complex responsible for the synthesis of proteins in the cell. Required for rRNA maturation. The polypeptide is Small ribosomal subunit protein eS7 (rps7) (Salmo salar (Atlantic salmon)).